Here is a 1053-residue protein sequence, read N- to C-terminus: Polyphosphate kinase (1053 aa).

3 disordered regions span residues 23–155 (LKIN…QLME), 200–245 (VQNP…TKSK), and 302–328 (NNNN…STSP). Positions 32–50 (STTTTTSTTTTTTTTTSTS) are enriched in low complexity. A compositionally biased stretch (acidic residues) spans 81 to 102 (VDFEDDYDEESSSFDEEDEDSA). Over residues 143–155 (TTANPVQNCQLME) the composition is skewed to polar residues. The span at 215–239 (SSGSSSSSSSNNNNSNSNSNGNCNS) shows a compositional bias: low complexity. The active-site Phosphohistidine intermediate is His-800. The segment at 1027 to 1053 (RSSPIDEDSQTQFMNQTNQKHPVIWSK) is disordered. A compositionally biased stretch (polar residues) spans 1036-1046 (QTQFMNQTNQK).

The protein belongs to the polyphosphate kinase 1 (PPK1) family. In terms of assembly, hexamer. May form higher oligomeric structures in the presence of ATP.

The protein resides in the vesicle. The catalysed reaction is [phosphate](n) + ATP = [phosphate](n+1) + ADP. Functionally, catalyzes the reversible transfer of the terminal phosphate of ATP to form a long-chain polyphosphate (polyP). Produces polyP in a broad range of chain lengths (50-300 Pi residues). Involved in development (growth and fruiting body formation), sporulation, phagocytosis, cell division and the late stages of cytokinesis. In Dictyostelium discoideum (Social amoeba), this protein is Polyphosphate kinase (ppkA).